The sequence spans 180 residues: NAD(P)H-quinone oxidoreductase subunit I, chloroplastic (180 aa).

4Fe-4S ferredoxin-type domains lie at 55–84 (GRIHFEFDKCIACEVCVRVCPIDLPVVDWR) and 95–124 (LNYSIDFGVCIFCGNCVEYCPTSCLSMTEE). Positions 64, 67, 70, 74, 104, 107, 110, and 114 each coordinate [4Fe-4S] cluster.

It belongs to the complex I 23 kDa subunit family. As to quaternary structure, NDH is composed of at least 16 different subunits, 5 of which are encoded in the nucleus. [4Fe-4S] cluster is required as a cofactor.

The protein resides in the plastid. It is found in the chloroplast thylakoid membrane. It catalyses the reaction a plastoquinone + NADH + (n+1) H(+)(in) = a plastoquinol + NAD(+) + n H(+)(out). The enzyme catalyses a plastoquinone + NADPH + (n+1) H(+)(in) = a plastoquinol + NADP(+) + n H(+)(out). Functionally, NDH shuttles electrons from NAD(P)H:plastoquinone, via FMN and iron-sulfur (Fe-S) centers, to quinones in the photosynthetic chain and possibly in a chloroplast respiratory chain. The immediate electron acceptor for the enzyme in this species is believed to be plastoquinone. Couples the redox reaction to proton translocation, and thus conserves the redox energy in a proton gradient. This is NAD(P)H-quinone oxidoreductase subunit I, chloroplastic from Triticum aestivum (Wheat).